The following is a 199-amino-acid chain: dITP/XTP pyrophosphatase (199 aa).

8 to 13 (SGNAGK) is a substrate binding site. Residue D69 is the Proton acceptor of the active site. D69 is a binding site for Mg(2+). Substrate-binding positions include S70, 154–157 (FGYN), K177, and 182–183 (HR).

It belongs to the HAM1 NTPase family. In terms of assembly, homodimer. The cofactor is Mg(2+).

It carries out the reaction XTP + H2O = XMP + diphosphate + H(+). The enzyme catalyses dITP + H2O = dIMP + diphosphate + H(+). It catalyses the reaction ITP + H2O = IMP + diphosphate + H(+). Its function is as follows. Pyrophosphatase that catalyzes the hydrolysis of nucleoside triphosphates to their monophosphate derivatives, with a high preference for the non-canonical purine nucleotides XTP (xanthosine triphosphate), dITP (deoxyinosine triphosphate) and ITP. Seems to function as a house-cleaning enzyme that removes non-canonical purine nucleotides from the nucleotide pool, thus preventing their incorporation into DNA/RNA and avoiding chromosomal lesions. This chain is dITP/XTP pyrophosphatase, found in Xanthomonas campestris pv. campestris (strain 8004).